Consider the following 61-residue polypeptide: Small ribosomal subunit protein uS14 (61 aa).

Residues Cys-24, Cys-27, Cys-40, and Cys-43 each contribute to the Zn(2+) site.

This sequence belongs to the universal ribosomal protein uS14 family. Zinc-binding uS14 subfamily. In terms of assembly, part of the 30S ribosomal subunit. Contacts proteins S3 and S10. Requires Zn(2+) as cofactor.

In terms of biological role, binds 16S rRNA, required for the assembly of 30S particles and may also be responsible for determining the conformation of the 16S rRNA at the A site. The sequence is that of Small ribosomal subunit protein uS14 from Bacillus anthracis (strain A0248).